A 215-amino-acid chain; its full sequence is MNQSILSPFGNTAEERVLNAINAFKNGNGVLVLDDEDRENEGDLIFPAETITPEQMAKLIRYGSGIVCLCITDERCQQLDLPSMVEHNNSVNKTAFTVTIEAAKGVSTGVSAADRVTTIQTAIADNAVPTDLHRPGHVFPLRAANGGVLTRRGHTEASVDLARLAGFKEAGVICEITNDDGTMARTPDIVEFAKKFGYSVLTIEDLVEYRLAHNI.

D-ribulose 5-phosphate-binding positions include 38-39 (RE), D43, 151-155 (RRGHT), and E175. E39 is a binding site for Mg(2+). H154 contacts Mg(2+).

Belongs to the DHBP synthase family. In terms of assembly, homodimer. Requires Mg(2+) as cofactor. The cofactor is Mn(2+).

The enzyme catalyses D-ribulose 5-phosphate = (2S)-2-hydroxy-3-oxobutyl phosphate + formate + H(+). It participates in cofactor biosynthesis; riboflavin biosynthesis; 2-hydroxy-3-oxobutyl phosphate from D-ribulose 5-phosphate: step 1/1. Catalyzes the conversion of D-ribulose 5-phosphate to formate and 3,4-dihydroxy-2-butanone 4-phosphate. This Haemophilus influenzae (strain PittEE) protein is 3,4-dihydroxy-2-butanone 4-phosphate synthase.